Here is a 316-residue protein sequence, read N- to C-terminus: Bifunctional peptidase and (3S)-lysyl hydroxylase Jmjd7 (316 aa).

A JmjC domain is found at 128–307 (VQKQCSNLPT…LKYSYFQLMD (180 aa)). H178, D180, and H277 together coordinate Fe cation.

As to quaternary structure, homodimer; disulfide-linked. Interacts with DRG1 and DRG2. The cofactor is Fe(2+).

The protein resides in the nucleus. Its subcellular location is the cytoplasm. The enzyme catalyses L-lysyl-[protein] + 2-oxoglutarate + O2 = (3S)-3-hydroxy-L-lysyl-[protein] + succinate + CO2. In terms of biological role, bifunctional enzyme that acts both as an endopeptidase and 2-oxoglutarate-dependent monooxygenase. Endopeptidase that cleaves histones N-terminal tails at the carboxyl side of methylated arginine or lysine residues, to generate 'tailless nucleosomes', which may trigger transcription elongation. Preferentially recognizes and cleaves monomethylated and dimethylated arginine residues of histones H2, H3 and H4. After initial cleavage, continues to digest histones tails via its aminopeptidase activity. Additionally, may play a role in protein biosynthesis by modifying the translation machinery. Acts as a Fe(2+) and 2-oxoglutarate-dependent monooxygenase, catalyzing (S)-stereospecific hydroxylation at C-3 of 'Lys-22' of DRG1 and 'Lys-21' of DRG2 translation factors (TRAFAC), promoting their interaction with ribonucleic acids (RNA). The chain is Bifunctional peptidase and (3S)-lysyl hydroxylase Jmjd7 from Mus musculus (Mouse).